A 97-amino-acid chain; its full sequence is Protein RADIALIS-like 6 (97 aa).

One can recognise an SANT domain in the interval serine 7–glutamate 59.

In terms of tissue distribution, expressed in the micropylar endosperm surrounding globular-stage embryos but no expression was detected elsewhere, including floral tissues.

Its subcellular location is the nucleus. Functionally, probable transcription factor. The protein is Protein RADIALIS-like 6 (RL6) of Arabidopsis thaliana (Mouse-ear cress).